The sequence spans 52 residues: Metallothionein-2 (52 aa).

2 consecutive repeats follow at residues 43-47 (QTCKC) and 48-52 (QTCKC).

This sequence belongs to the metallothionein superfamily. Type 10 family.

Its function is as follows. The metallothioneins are involved in the cellular sequestration of toxic metal ions. In Candida glabrata (strain ATCC 2001 / BCRC 20586 / JCM 3761 / NBRC 0622 / NRRL Y-65 / CBS 138) (Yeast), this protein is Metallothionein-2 (MT-II).